Here is a 500-residue protein sequence, read N- to C-terminus: Putative beta-glucosidase 5 (500 aa).

The first 20 residues, 1-20 (MEQFFALFTIFLSFAFPGRC), serve as a signal peptide directing secretion. Residues Gln-43, His-140, and 185 to 186 (NE) contribute to the a beta-D-glucoside site. Glu-186 serves as the catalytic Proton donor. Cys-205 and Cys-212 are oxidised to a cystine. Asn-216 carries an N-linked (GlcNAc...) asparagine glycan. Residue Tyr-328 participates in a beta-D-glucoside binding. Asn-361 is a glycosylation site (N-linked (GlcNAc...) asparagine). Glu-394 contacts a beta-D-glucoside. Residue Glu-394 is the Nucleophile of the active site. N-linked (GlcNAc...) asparagine glycosylation occurs at Asn-424. The a beta-D-glucoside site is built by Trp-434 and Tyr-450. N-linked (GlcNAc...) asparagine glycans are attached at residues Asn-456 and Asn-495.

It belongs to the glycosyl hydrolase 1 family.

It carries out the reaction Hydrolysis of terminal, non-reducing beta-D-glucosyl residues with release of beta-D-glucose.. The sequence is that of Putative beta-glucosidase 5 from Arabidopsis thaliana (Mouse-ear cress).